Consider the following 142-residue polypeptide: Pro-opiomelanocortin (142 aa).

Positions 1 to 8 are excised as a propeptide; the sequence is SEPGRREG. Position 23 is a valine amide (Val23). Ser41 is modified (phosphoserine).

Belongs to the POMC family. In terms of processing, specific enzymatic cleavages at paired basic residues yield the different active peptides. ACTH and MSH are produced by the pituitary gland.

It localises to the secreted. Functionally, stimulates the adrenal glands to release cortisol. In terms of biological role, anorexigenic peptide. Increases the pigmentation of skin by increasing melanin production in melanocytes. Increases the pigmentation of skin by increasing melanin production in melanocytes. Its function is as follows. Endogenous orexigenic opiate. Functionally, endogenous opiate. This is Pro-opiomelanocortin (POMC) from Neovison vison (American mink).